The following is a 192-amino-acid chain: MTKSVRLEEGDASKVLVPVGSNKGVSVMDLVLRLVGIAGTLGAAIAMGTNEQTLPFFTRFVVFNAEYDDFRSFRLFVIVNAIVCAYFVLTLPLSIVHIMRSAARGSRILLIIMDTVMLALLTAGASAAASIVYLAHNGNTSTNWLPVCQQYGDFCQGASGSLIGSFGAVVVFILIILLGAIALSRHAKRVVL.

The Cytoplasmic segment spans residues Met1–Ser26. A helical membrane pass occupies residues Val27–Met47. At Gly48–Leu75 the chain is on the extracellular side. Residues Phe76–Val96 traverse the membrane as a helical segment. Over His97–Arg107 the chain is Cytoplasmic. A helical transmembrane segment spans residues Ile108–Ala128. Residues Ala129 to Ser161 lie on the Extracellular side of the membrane. Asn139 carries N-linked (GlcNAc...) asparagine glycosylation. The chain crosses the membrane as a helical span at residues Leu162–Ala182. The Cytoplasmic segment spans residues Leu183–Leu192.

Belongs to the Casparian strip membrane proteins (CASP) family. Homodimer and heterodimers.

It is found in the cell membrane. Functionally, regulates membrane-cell wall junctions and localized cell wall deposition. Required for establishment of the Casparian strip membrane domain (CSD) and the subsequent formation of Casparian strips, a cell wall modification of the root endodermis that determines an apoplastic barrier between the intraorganismal apoplasm and the extraorganismal apoplasm and prevents lateral diffusion. This Lactuca saligna (Willowleaf lettuce) protein is Casparian strip membrane protein 1.